The primary structure comprises 480 residues: MGENTVPQKSSDNVGSIVALMVALLVAIFAFQLNASMLSPALVTMQAQLHTTASSIALTQTIFFTAAALFALFLPRLADLIGRKKVLIGMLTLTMIGCLISGFATNVGILMIGRILQGAAGPVVPLCLIILHVKVRDEKRYAKLMAILTSINGGIAGVDALAGGWLVSHGGFRSVFFVMGITAALAILLVSFGTQESTAKDTPKMDWTGVILLVVAMGALLSAVNALQGSFGNLGLPNWLLASILALLGLICFVGFWQVEKRVNHPMVPIHYLKQRRTWGLLITTLLTMTGVFAIMNGIIPALGQDGKFGLGLGADMVSLVTLTPYALAGLFFGPVSGFLAARFGFAKVLRVGLLTTIIGIVLAVAGVLQPSIWLLLLVSTFIGITYAGITNIMLNGLGIVLSPEDNPGYLPGLNAGMFNLGAGLSFIILYAVPTVLHTSVGGSSSGYISGIVTGLILVIIAFFTSFLIPDSKDCKINLE.

14 helical membrane-spanning segments follow: residues 14 to 34, 55 to 75, 93 to 113, 115 to 135, 147 to 167, 174 to 194, 207 to 227, 239 to 259, 280 to 300, 320 to 340, 358 to 378, 382 to 402, 417 to 437, and 449 to 469; these read VGSI…FQLN, SIAL…LFLP, LTMI…LMIG, ILQG…HVKV, ILTS…GWLV, SVFF…SFGT, WTGV…VNAL, WLLA…FWQV, GLLI…NGII, LVTL…SGFL, IIGI…LLLL, FIGI…GIVL, GMFN…PTVL, and ISGI…SFLI.

This sequence belongs to the major facilitator superfamily. EmrB family.

It is found in the cell membrane. Its function is as follows. Responsible for the uptake of uridine and deoxyuridine. Not involved in purine nucleoside uptake. This is Uridine/deoxyuridine transporter from Lactococcus lactis subsp. cremoris (strain MG1363).